We begin with the raw amino-acid sequence, 106 residues long: Glutaredoxin-1 (106 aa).

Ala-1 is modified (N-acetylalanine). In terms of domain architecture, Glutaredoxin spans 2–105 (QEFVNSKIQP…ARLKEMGALR (104 aa)). Residue Lys-8 is modified to N6-succinyllysine. 2 disulfide bridges follow: Cys-22-Cys-25 and Cys-78-Cys-82.

It belongs to the glutaredoxin family.

Its subcellular location is the cytoplasm. Has a glutathione-disulfide oxidoreductase activity in the presence of NADPH and glutathione reductase. Reduces low molecular weight disulfides and proteins. In Oryctolagus cuniculus (Rabbit), this protein is Glutaredoxin-1 (GLRX).